Here is a 217-residue protein sequence, read N- to C-terminus: Large ribosomal subunit protein uL3 (217 aa).

The tract at residues 129–161 is disordered; it reads SRGPMSHGSKNHRAPGSTGAGTTPGRIYPGKRM. Positions 142–153 are enriched in low complexity; sequence APGSTGAGTTPG.

It belongs to the universal ribosomal protein uL3 family. As to quaternary structure, part of the 50S ribosomal subunit. Forms a cluster with proteins L14 and L19.

Its function is as follows. One of the primary rRNA binding proteins, it binds directly near the 3'-end of the 23S rRNA, where it nucleates assembly of the 50S subunit. This is Large ribosomal subunit protein uL3 from Prochlorococcus marinus subsp. pastoris (strain CCMP1986 / NIES-2087 / MED4).